The chain runs to 123 residues: Large-conductance mechanosensitive channel (123 aa).

Helical transmembrane passes span 14–34 and 67–87; these read VLDL…VTSL and GNFI…FLLV.

This sequence belongs to the MscL family. Homopentamer.

It is found in the cell membrane. Channel that opens in response to stretch forces in the membrane lipid bilayer. May participate in the regulation of osmotic pressure changes within the cell. This Lacticaseibacillus casei (strain BL23) (Lactobacillus casei) protein is Large-conductance mechanosensitive channel.